The sequence spans 296 residues: Protoheme IX farnesyltransferase (296 aa).

Transmembrane regions (helical) follow at residues 8 to 28 (VTKP…FFLA), 35 to 55 (WILM…GCAI), 84 to 104 (AAFF…SYFT), 107 to 127 (VAVA…TMYF), 132 to 152 (VYGT…GYCA), 162 to 182 (AILL…IAIF), 215 to 235 (FAVV…FMVV), and 264 to 284 (VFFF…LDFN).

Belongs to the UbiA prenyltransferase family. Protoheme IX farnesyltransferase subfamily.

It is found in the cell inner membrane. It carries out the reaction heme b + (2E,6E)-farnesyl diphosphate + H2O = Fe(II)-heme o + diphosphate. It participates in porphyrin-containing compound metabolism; heme O biosynthesis; heme O from protoheme: step 1/1. Converts heme B (protoheme IX) to heme O by substitution of the vinyl group on carbon 2 of heme B porphyrin ring with a hydroxyethyl farnesyl side group. This Marinomonas sp. (strain MWYL1) protein is Protoheme IX farnesyltransferase.